The primary structure comprises 75 residues: Acyl carrier protein (75 aa).

Positions Met-1 to Glu-75 constitute a Carrier domain. Ser-35 is subject to O-(pantetheine 4'-phosphoryl)serine.

This sequence belongs to the acyl carrier protein (ACP) family. In terms of processing, 4'-phosphopantetheine is transferred from CoA to a specific serine of apo-ACP by AcpS. This modification is essential for activity because fatty acids are bound in thioester linkage to the sulfhydryl of the prosthetic group.

It localises to the cytoplasm. Its pathway is lipid metabolism; fatty acid biosynthesis. Carrier of the growing fatty acid chain in fatty acid biosynthesis. In Thermoanaerobacter pseudethanolicus (strain ATCC 33223 / 39E) (Clostridium thermohydrosulfuricum), this protein is Acyl carrier protein.